Here is a 66-residue protein sequence, read N- to C-terminus: Large ribosomal subunit protein uL29 (66 aa).

Belongs to the universal ribosomal protein uL29 family.

This Pseudothermotoga lettingae (strain ATCC BAA-301 / DSM 14385 / NBRC 107922 / TMO) (Thermotoga lettingae) protein is Large ribosomal subunit protein uL29.